A 250-amino-acid chain; its full sequence is Expansin-like B1 (250 aa).

The N-terminal stretch at 1 to 24 (MKHSHVLLLLFVQVIVLLPLLCLS) is a signal peptide. Positions 45–149 (RGHCGYGEFG…QRIPCRYAGY (105 aa)) constitute an Expansin-like EG45 domain. Asn-72 is a glycosylation site (N-linked (GlcNAc...) asparagine). The region spanning 163–245 (HYLAILVLYV…DWTAGATYDS (83 aa)) is the Expansin-like CBD domain.

This sequence belongs to the expansin family. Expansin-like B subfamily.

Its subcellular location is the secreted. The polypeptide is Expansin-like B1 (EXLB1) (Arabidopsis thaliana (Mouse-ear cress)).